The following is a 1070-amino-acid chain: DNA-directed RNA polymerase subunit beta (1070 aa).

Belongs to the RNA polymerase beta chain family. As to quaternary structure, in plastids the minimal PEP RNA polymerase catalytic core is composed of four subunits: alpha, beta, beta', and beta''. When a (nuclear-encoded) sigma factor is associated with the core the holoenzyme is formed, which can initiate transcription.

Its subcellular location is the plastid. It localises to the chloroplast. The enzyme catalyses RNA(n) + a ribonucleoside 5'-triphosphate = RNA(n+1) + diphosphate. DNA-dependent RNA polymerase catalyzes the transcription of DNA into RNA using the four ribonucleoside triphosphates as substrates. The polypeptide is DNA-directed RNA polymerase subunit beta (Phaseolus vulgaris (Kidney bean)).